The following is a 198-amino-acid chain: Superoxide dismutase [Fe] (198 aa).

Residues histidine 27, histidine 74, aspartate 158, and histidine 162 each coordinate Fe cation.

It belongs to the iron/manganese superoxide dismutase family. In terms of assembly, homodimer. Requires Fe cation as cofactor.

It is found in the cytoplasm. The catalysed reaction is 2 superoxide + 2 H(+) = H2O2 + O2. Functionally, destroys superoxide anion radicals which are normally produced within the cells and which are toxic to biological systems. This chain is Superoxide dismutase [Fe] (SODB), found in Plasmodium falciparum (isolate 3D7).